The following is a 91-amino-acid chain: ATP synthase subunit c (91 aa).

2 helical membrane passes run 4 to 24 and 53 to 73; these read FTMC…GTGI and IGLA…LIIL.

The protein belongs to the ATPase C chain family. In terms of assembly, F-type ATPases have 2 components, F(1) - the catalytic core - and F(0) - the membrane proton channel. F(1) has five subunits: alpha(3), beta(3), gamma(1), delta(1), epsilon(1). F(0) has three main subunits: a(1), b(2) and c(10-14). The alpha and beta chains form an alternating ring which encloses part of the gamma chain. F(1) is attached to F(0) by a central stalk formed by the gamma and epsilon chains, while a peripheral stalk is formed by the delta and b chains.

It localises to the cell inner membrane. Functionally, f(1)F(0) ATP synthase produces ATP from ADP in the presence of a proton or sodium gradient. F-type ATPases consist of two structural domains, F(1) containing the extramembraneous catalytic core and F(0) containing the membrane proton channel, linked together by a central stalk and a peripheral stalk. During catalysis, ATP synthesis in the catalytic domain of F(1) is coupled via a rotary mechanism of the central stalk subunits to proton translocation. Its function is as follows. Key component of the F(0) channel; it plays a direct role in translocation across the membrane. A homomeric c-ring of between 10-14 subunits forms the central stalk rotor element with the F(1) delta and epsilon subunits. The polypeptide is ATP synthase subunit c (Geotalea daltonii (strain DSM 22248 / JCM 15807 / FRC-32) (Geobacter daltonii)).